A 975-amino-acid polypeptide reads, in one-letter code: Translation initiation factor IF-2 (975 aa).

Disordered regions lie at residues 49-110 (KLSG…APKA) and 193-339 (AAAP…GRGA). Basic residues predominate over residues 63 to 72 (KKTAARKAAP). Composition is skewed to low complexity over residues 73–94 (KKAAVAAPVPEADASSAAAKTP), 193–202 (AAAPEAPAPQ), and 209–225 (VVGTSGVSSSATPASAP). The segment covering 308–318 (GADRGGRDFDK) has biased composition (basic and acidic residues). A compositionally biased stretch (low complexity) spans 324–336 (GPSAPAAGPAAAG). The tr-type G domain maps to 469–639 (TRPPVVTVMG…KLVAEVAELK (171 aa)). Positions 478–485 (GHVDHGKT) are G1. Residue 478–485 (GHVDHGKT) coordinates GTP. Residues 503 to 507 (GITQH) are G2. The interval 525–528 (DTPG) is G3. GTP is bound by residues 525-529 (DTPGH) and 579-582 (NKID). The tract at residues 579-582 (NKID) is G4. Residues 615–617 (SAL) form a G5 region.

Belongs to the TRAFAC class translation factor GTPase superfamily. Classic translation factor GTPase family. IF-2 subfamily.

The protein localises to the cytoplasm. One of the essential components for the initiation of protein synthesis. Protects formylmethionyl-tRNA from spontaneous hydrolysis and promotes its binding to the 30S ribosomal subunits. Also involved in the hydrolysis of GTP during the formation of the 70S ribosomal complex. The protein is Translation initiation factor IF-2 of Bdellovibrio bacteriovorus (strain ATCC 15356 / DSM 50701 / NCIMB 9529 / HD100).